Here is a 71-residue protein sequence, read N- to C-terminus: uncharacterized protein (71 aa).

Residues 37-57 (IGVGVSDGVSAGVGVGVAMII) form a helical membrane-spanning segment.

The protein resides in the membrane. This is an uncharacterized protein from Dictyostelium discoideum (Social amoeba).